We begin with the raw amino-acid sequence, 692 residues long: UvrABC system protein B (692 aa).

One can recognise a Helicase ATP-binding domain in the interval 32-187 (ENIENGEKAQ…LLNDLVGIQF (156 aa)). 45–52 (GATGTGKT) contacts ATP. Residues 98-121 (YYDYYQPEAYVPSSDTYIEKDSSV) carry the Beta-hairpin motif. The Helicase C-terminal domain maps to 436 to 631 (QIDDLVGEIH…TIKKEIRDLI (196 aa)). One can recognise a UVR domain in the interval 656–691 (KALVKKLEKEMQQAAAALDFEGAAQLRDMVLELRAM).

The protein belongs to the UvrB family. In terms of assembly, forms a heterotetramer with UvrA during the search for lesions. Interacts with UvrC in an incision complex.

Its subcellular location is the cytoplasm. The UvrABC repair system catalyzes the recognition and processing of DNA lesions. A damage recognition complex composed of 2 UvrA and 2 UvrB subunits scans DNA for abnormalities. Upon binding of the UvrA(2)B(2) complex to a putative damaged site, the DNA wraps around one UvrB monomer. DNA wrap is dependent on ATP binding by UvrB and probably causes local melting of the DNA helix, facilitating insertion of UvrB beta-hairpin between the DNA strands. Then UvrB probes one DNA strand for the presence of a lesion. If a lesion is found the UvrA subunits dissociate and the UvrB-DNA preincision complex is formed. This complex is subsequently bound by UvrC and the second UvrB is released. If no lesion is found, the DNA wraps around the other UvrB subunit that will check the other stand for damage. This chain is UvrABC system protein B, found in Lactococcus lactis subsp. cremoris (strain MG1363).